A 252-amino-acid chain; its full sequence is Trans-aconitate 2-methyltransferase (252 aa).

It belongs to the methyltransferase superfamily. Tam family.

Its subcellular location is the cytoplasm. It carries out the reaction trans-aconitate + S-adenosyl-L-methionine = (E)-3-(methoxycarbonyl)pent-2-enedioate + S-adenosyl-L-homocysteine. Functionally, catalyzes the S-adenosylmethionine monomethyl esterification of trans-aconitate. The protein is Trans-aconitate 2-methyltransferase of Escherichia coli (strain SE11).